The primary structure comprises 262 residues: MVSIPLILGAIILLGTRKAATAALPPRPCAFAVTAATDDTCQSLGAQWGIGMAQFLKWNPGVNCNALVAGKTYCLSAGDSELGPTASLTPSPQVPTTSRATQTMTSKASTGTLVSRSGPIKFLNGMAPDCLFYHPVSPGDTCQSIVDRYKAFTLDQFYTWNPSVGKNCESLWLGYYVCTGVKGGPNSPSQQPPSQQPPSQQSPSQQSPSQQSPSQQPPSQQPPSQQPPSQQSNTSQQTQPNVNSKCKFHIFCLGTLAYMAFD.

The signal sequence occupies residues 1–22 (MVSIPLILGAIILLGTRKAATA). The LysM 1 domain maps to 31–75 (FAVTAATDDTCQSLGAQWGIGMAQFLKWNPGVNCNALVAGKTYCL). Residues 85 to 112 (TASLTPSPQVPTTSRATQTMTSKASTGT) are disordered. Residues 86 to 112 (ASLTPSPQVPTTSRATQTMTSKASTGT) show a composition bias toward polar residues. Residues 132 to 179 (FYHPVSPGDTCQSIVDRYKAFTLDQFYTWNPSVGKNCESLWLGYYVCT) enclose the LysM 2 domain. Residues 184 to 240 (GPNSPSQQPPSQQPPSQQSPSQQSPSQQSPSQQPPSQQPPSQQPPSQQSNTSQQTQP) are disordered. The span at 197-214 (PPSQQSPSQQSPSQQSPS) shows a compositional bias: low complexity. A compositionally biased stretch (pro residues) spans 215 to 226 (QQPPSQQPPSQQ). A compositionally biased stretch (low complexity) spans 227–240 (PPSQQSNTSQQTQP). Residue N233 is glycosylated (N-linked (GlcNAc...) asparagine).

The protein localises to the secreted. In terms of biological role, might have a role in sequestration of chitin oligosaccharides (breakdown products of fungal cell walls that are released during invasion and act as triggers of host immunity) to dampen host defense. The protein is LysM domain-containing protein ARB_03438 of Arthroderma benhamiae (strain ATCC MYA-4681 / CBS 112371) (Trichophyton mentagrophytes).